Here is a 528-residue protein sequence, read N- to C-terminus: Importin subunit alpha-2 (528 aa).

The segment covering 1 to 15 (MADDSASPSPSSASP) has biased composition (low complexity). A disordered region spans residues 1-36 (MADDSASPSPSSASPLQHHREALKSSVRNTAASRRR). ARM repeat units follow at residues 125 to 165 (VPLV…NIAA), 167 to 206 (EPEE…NVAG), 209 to 248 (AELR…NLIK), 253 to 292 (KAAN…YLSA), 294 to 335 (SDRG…NLIA), 338 to 383 (DYMV…NIAA), 386 to 425 (FEHK…NLCV), and 438 to 477 (VEHL…LVMR).

It belongs to the importin alpha family. In terms of assembly, forms a complex with importin subunit beta-1. The whole complex, most stable and composed of importin alpha, importin beta and NLS substrate, is referred to as PTAC or pore targeting complex. As to expression, expressed in root, callus, and etiolated leaf. Low expression in green leaf.

Its subcellular location is the cytoplasm. It localises to the perinuclear region. Binds specifically and directly to substrates containing either a simple or bipartite NLS motif. Promotes docking of import substrates to the nuclear envelope. This is Importin subunit alpha-2 from Oryza sativa subsp. japonica (Rice).